Consider the following 145-residue polypeptide: Large ribosomal subunit protein uL24 (145 aa).

2 disordered regions span residues 1–21 and 122–145; these read MKFN…HFNA and KAKS…KMQE. Lys136 is covalently cross-linked (Glycyl lysine isopeptide (Lys-Gly) (interchain with G-Cter in SUMO2)). At Thr139 the chain carries Phosphothreonine.

The protein belongs to the universal ribosomal protein uL24 family. Component of the large ribosomal subunit. Interacts with DHX33. In terms of processing, ufmylated by UFL1 in response to endoplasmic reticulum stress, promoting reticulophagy of endoplasmic reticulum sheets.

It localises to the cytoplasm. Component of the large ribosomal subunit. The ribosome is a large ribonucleoprotein complex responsible for the synthesis of proteins in the cell. The chain is Large ribosomal subunit protein uL24 (Rpl26) from Rattus norvegicus (Rat).